Consider the following 338-residue polypeptide: Ketol-acid reductoisomerase (NADP(+)) (338 aa).

One can recognise a KARI N-terminal Rossmann domain in the interval 1-181 (MKVYYDKDCD…GGGRTGIIET (181 aa)). Residues 24–27 (YGSQ), Arg-47, Ser-50, Ser-52, and 82–85 (DEFQ) each bind NADP(+). The active site involves His-107. An NADP(+)-binding site is contributed by Gly-133. In terms of domain architecture, KARI C-terminal knotted spans 182 to 327 (TFKDETETDL…EKLRTMMPWI (146 aa)). Positions 190, 194, 226, and 230 each coordinate Mg(2+). Substrate is bound at residue Ser-251.

Belongs to the ketol-acid reductoisomerase family. Requires Mg(2+) as cofactor.

The enzyme catalyses (2R)-2,3-dihydroxy-3-methylbutanoate + NADP(+) = (2S)-2-acetolactate + NADPH + H(+). The catalysed reaction is (2R,3R)-2,3-dihydroxy-3-methylpentanoate + NADP(+) = (S)-2-ethyl-2-hydroxy-3-oxobutanoate + NADPH + H(+). It functions in the pathway amino-acid biosynthesis; L-isoleucine biosynthesis; L-isoleucine from 2-oxobutanoate: step 2/4. The protein operates within amino-acid biosynthesis; L-valine biosynthesis; L-valine from pyruvate: step 2/4. Functionally, involved in the biosynthesis of branched-chain amino acids (BCAA). Catalyzes an alkyl-migration followed by a ketol-acid reduction of (S)-2-acetolactate (S2AL) to yield (R)-2,3-dihydroxy-isovalerate. In the isomerase reaction, S2AL is rearranged via a Mg-dependent methyl migration to produce 3-hydroxy-3-methyl-2-ketobutyrate (HMKB). In the reductase reaction, this 2-ketoacid undergoes a metal-dependent reduction by NADPH to yield (R)-2,3-dihydroxy-isovalerate. The chain is Ketol-acid reductoisomerase (NADP(+)) from Azotobacter vinelandii (strain DJ / ATCC BAA-1303).